A 291-amino-acid polypeptide reads, in one-letter code: Orotidine 5'-phosphate decarboxylase (291 aa).

The active-site Proton donor is the lysine 97.

This sequence belongs to the OMP decarboxylase family. Type 2 subfamily.

The catalysed reaction is orotidine 5'-phosphate + H(+) = UMP + CO2. Its pathway is pyrimidine metabolism; UMP biosynthesis via de novo pathway; UMP from orotate: step 2/2. This chain is Orotidine 5'-phosphate decarboxylase, found in Clostridium kluyveri (strain ATCC 8527 / DSM 555 / NBRC 12016 / NCIMB 10680 / K1).